A 185-amino-acid polypeptide reads, in one-letter code: Ribosome-recycling factor (185 aa).

It belongs to the RRF family.

The protein resides in the cytoplasm. Functionally, responsible for the release of ribosomes from messenger RNA at the termination of protein biosynthesis. May increase the efficiency of translation by recycling ribosomes from one round of translation to another. In Campylobacter lari (strain RM2100 / D67 / ATCC BAA-1060), this protein is Ribosome-recycling factor.